A 256-amino-acid chain; its full sequence is Imidazole glycerol phosphate synthase subunit HisF (256 aa).

Residues D12 and D131 contribute to the active site.

The protein belongs to the HisA/HisF family. As to quaternary structure, heterodimer of HisH and HisF.

It is found in the cytoplasm. The catalysed reaction is 5-[(5-phospho-1-deoxy-D-ribulos-1-ylimino)methylamino]-1-(5-phospho-beta-D-ribosyl)imidazole-4-carboxamide + L-glutamine = D-erythro-1-(imidazol-4-yl)glycerol 3-phosphate + 5-amino-1-(5-phospho-beta-D-ribosyl)imidazole-4-carboxamide + L-glutamate + H(+). The protein operates within amino-acid biosynthesis; L-histidine biosynthesis; L-histidine from 5-phospho-alpha-D-ribose 1-diphosphate: step 5/9. IGPS catalyzes the conversion of PRFAR and glutamine to IGP, AICAR and glutamate. The HisF subunit catalyzes the cyclization activity that produces IGP and AICAR from PRFAR using the ammonia provided by the HisH subunit. This chain is Imidazole glycerol phosphate synthase subunit HisF, found in Bifidobacterium longum (strain NCC 2705).